The following is an 877-amino-acid chain: Bifunctional uridylyltransferase/uridylyl-removing enzyme (877 aa).

The interval 1 to 335 is uridylyltransferase; sequence MDGPNSDRAH…HRDDAFSPTP (335 aa). The segment at 336 to 695 is uridylyl-removing; it reads VNDHFQAVND…LRPESLRGSV (360 aa). In terms of domain architecture, HD spans 454-576; it reads VDEHTLFVVR…VRNQNTLNHL (123 aa). ACT domains follow at residues 696-778 and 805-877; these read EVFI…AVSR and ILEL…VGDQ.

Belongs to the GlnD family. Mg(2+) serves as cofactor.

It catalyses the reaction [protein-PII]-L-tyrosine + UTP = [protein-PII]-uridylyl-L-tyrosine + diphosphate. The enzyme catalyses [protein-PII]-uridylyl-L-tyrosine + H2O = [protein-PII]-L-tyrosine + UMP + H(+). Its activity is regulated as follows. Uridylyltransferase (UTase) activity is inhibited by glutamine, while glutamine activates uridylyl-removing (UR) activity. Functionally, modifies, by uridylylation and deuridylylation, the PII regulatory proteins (GlnB and homologs), in response to the nitrogen status of the cell that GlnD senses through the glutamine level. Under low glutamine levels, catalyzes the conversion of the PII proteins and UTP to PII-UMP and PPi, while under higher glutamine levels, GlnD hydrolyzes PII-UMP to PII and UMP (deuridylylation). Thus, controls uridylylation state and activity of the PII proteins, and plays an important role in the regulation of nitrogen fixation and metabolism. The protein is Bifunctional uridylyltransferase/uridylyl-removing enzyme of Methylococcus capsulatus (strain ATCC 33009 / NCIMB 11132 / Bath).